Consider the following 630-residue polypeptide: 1,4-alpha-glucan branching enzyme GlgB (630 aa).

Aspartate 308 acts as the Nucleophile in catalysis. Residue glutamate 361 is the Proton donor of the active site.

Belongs to the glycosyl hydrolase 13 family. GlgB subfamily. In terms of assembly, monomer.

The catalysed reaction is Transfers a segment of a (1-&gt;4)-alpha-D-glucan chain to a primary hydroxy group in a similar glucan chain.. Its pathway is glycan biosynthesis; glycogen biosynthesis. Catalyzes the formation of the alpha-1,6-glucosidic linkages in glycogen by scission of a 1,4-alpha-linked oligosaccharide from growing alpha-1,4-glucan chains and the subsequent attachment of the oligosaccharide to the alpha-1,6 position. The sequence is that of 1,4-alpha-glucan branching enzyme GlgB from Halothermothrix orenii (strain H 168 / OCM 544 / DSM 9562).